The following is a 208-amino-acid chain: Ribosomal RNA small subunit methyltransferase G (208 aa).

S-adenosyl-L-methionine is bound by residues Gly73, Leu78, 127-128 (VE), and Arg141.

It belongs to the methyltransferase superfamily. RNA methyltransferase RsmG family.

The protein localises to the cytoplasm. It catalyses the reaction guanosine(527) in 16S rRNA + S-adenosyl-L-methionine = N(7)-methylguanosine(527) in 16S rRNA + S-adenosyl-L-homocysteine. Its function is as follows. Specifically methylates the N7 position of guanine in position 527 of 16S rRNA. The polypeptide is Ribosomal RNA small subunit methyltransferase G (Cereibacter sphaeroides (strain ATCC 17025 / ATH 2.4.3) (Rhodobacter sphaeroides)).